Consider the following 38-residue polypeptide: Photosystem II reaction center protein L (38 aa).

A helical membrane pass occupies residues 17 to 37; sequence SLYWGLLLIFVLAILFSNYIF.

The protein belongs to the PsbL family. As to quaternary structure, PSII is composed of 1 copy each of membrane proteins PsbA, PsbB, PsbC, PsbD, PsbE, PsbF, PsbH, PsbI, PsbJ, PsbK, PsbL, PsbM, PsbT, PsbX, PsbY, PsbZ, Psb30/Ycf12, at least 3 peripheral proteins of the oxygen-evolving complex and a large number of cofactors. It forms dimeric complexes.

It is found in the plastid. The protein resides in the chloroplast thylakoid membrane. Functionally, one of the components of the core complex of photosystem II (PSII). PSII is a light-driven water:plastoquinone oxidoreductase that uses light energy to abstract electrons from H(2)O, generating O(2) and a proton gradient subsequently used for ATP formation. It consists of a core antenna complex that captures photons, and an electron transfer chain that converts photonic excitation into a charge separation. This subunit is found at the monomer-monomer interface and is required for correct PSII assembly and/or dimerization. In Chlorokybus atmophyticus (Soil alga), this protein is Photosystem II reaction center protein L.